The primary structure comprises 225 residues: UPF0758 protein SZO_09140 (225 aa).

An MPN domain is found at 102 to 224; it reads PVLSSAQVAE…YYSFREKSDL (123 aa). Zn(2+) contacts are provided by His-173, His-175, and Asp-186. The JAMM motif motif lies at 173–186; that stretch reads HNHPSGLTKPSAND.

Belongs to the UPF0758 family.

This chain is UPF0758 protein SZO_09140, found in Streptococcus equi subsp. zooepidemicus (strain H70).